The following is a 290-amino-acid chain: Programmed cell death 1 ligand 1 (290 aa).

The N-terminal stretch at 1–18 (MRIFAGIIFTACCHLLRA) is a signal peptide. An Ig-like V-type domain is found at 19–127 (FTITAPKDLY…YGGADYKRIT (109 aa)). Topologically, residues 19 to 239 (FTITAPKDLY…ATHPPQNRTH (221 aa)) are extracellular. Asn35 carries N-linked (GlcNAc...) asparagine glycosylation. 2 disulfides stabilise this stretch: Cys40–Cys114 and Cys154–Cys208. The 92-residue stretch at 133 to 224 (PYRKINQRIS…PGQNHTAELI (92 aa)) folds into the Ig-like C2-type domain. N-linked (GlcNAc...) asparagine glycans are attached at residues Asn191, Asn199, Asn218, and Asn236. Residues 240–260 (WVLLGSILLFLIVVSTVLLFL) traverse the membrane as a helical segment. At 261 to 290 (RKQVRMLDVEKCGVEDTSSKNRNDTQFEET) the chain is on the cytoplasmic side.

This sequence belongs to the immunoglobulin superfamily. BTN/MOG family. Interacts with PDCD1. Interacts with CMTM4 and CMTM6. Interacts with CD80. Ubiquitinated; STUB1 likely mediates polyubiquitination of PD-L1/CD274 triggering its degradation. Ubiquitinated by MARCHF8; leading to degradation. Deubiquitinated by USP22; leading to stabilization. Highly expressed in the heart, thymus, skeletal muscle, and lung. Weakly expressed in the kidney, spleen, thyroid, and liver. Expressed on activated dendritic cells, B-cells and macrophages. Expressed in numerous tumor cells lines of lymphoid origin.

The protein localises to the cell membrane. It is found in the early endosome membrane. Its subcellular location is the recycling endosome membrane. Functionally, plays a critical role in induction and maintenance of immune tolerance to self. As a ligand for the inhibitory receptor PDCD1/PD-1, modulates the activation threshold of T-cells and limits T-cell effector response. Through a yet unknown activating receptor, may costimulate T-cell subsets that predominantly produce interleukin-10 (IL10). The PDCD1-mediated inhibitory pathway is exploited by tumors to attenuate anti-tumor immunity and escape destruction by the immune system, thereby facilitating tumor survival. The interaction with PDCD1/PD-1 inhibits cytotoxic T lymphocytes (CTLs) effector function. The blockage of the PDCD1-mediated pathway results in the reversal of the exhausted T-cell phenotype and the normalization of the anti-tumor response, providing a rationale for cancer immunotherapy. The chain is Programmed cell death 1 ligand 1 (Cd274) from Mus musculus (Mouse).